An 872-amino-acid polypeptide reads, in one-letter code: Adhesive plaque matrix protein (872 aa).

An N-terminal signal peptide occupies residues Met-1–Ala-20. The segment at Leu-21–Ala-41 is nonrepetitive linker. 69 repeat units span residues Tyr-124 to Ser-133, Tyr-134 to Thr-143, Tyr-144 to Thr-153, Tyr-154 to Ser-163, Tyr-174 to Thr-183, Tyr-184 to Pro-192, Tyr-193 to Thr-202, Tyr-203 to Thr-212, Tyr-213 to Pro-221, Tyr-222 to Thr-231, Tyr-232 to Ile-241, Tyr-242 to Ser-251, Tyr-252 to Thr-261, Tyr-262 to Thr-271, Tyr-272 to Thr-281, Tyr-282 to Thr-291, Tyr-292 to Thr-301, Tyr-302 to Thr-311, Tyr-312 to Pro-321, Tyr-322 to Ile-331, Tyr-332 to Ser-341, Tyr-342 to Thr-351, Tyr-352 to Thr-361, Tyr-362 to Ser-371, Tyr-372 to Thr-381, Tyr-382 to Thr-391, Tyr-402 to Thr-411, Tyr-412 to Thr-421, Tyr-422 to Ser-431, Tyr-432 to Thr-441, Tyr-442 to Thr-451, Tyr-452 to Thr-461, Tyr-462 to Thr-471, Tyr-472 to Thr-481, Tyr-482 to Thr-491, Tyr-502 to Ile-511, Tyr-512 to Ser-521, Tyr-522 to Thr-531, Tyr-532 to Thr-541, Tyr-542 to Ser-551, Tyr-552 to Thr-561, Tyr-562 to Thr-571, Tyr-572 to Thr-581, Tyr-582 to Thr-591, Tyr-602 to Ile-611, Tyr-612 to Ala-621, Tyr-622 to Thr-631, Tyr-632 to Thr-641, Tyr-642 to Ser-651, Tyr-652 to Thr-661, Tyr-662 to Ala-671, Tyr-672 to Ser-681, Tyr-682 to Ser-691, Tyr-702 to Thr-711, Tyr-712 to Ser-721, Tyr-722 to Thr-731, Tyr-732 to Thr-741, Tyr-742 to Thr-751, Tyr-752 to Ser-761, Tyr-762 to Thr-771, Tyr-772 to Ser-781, Tyr-782 to Thr-791, Tyr-792 to Ser-801, Tyr-812 to Ser-821, Tyr-822 to Thr-831, Tyr-832 to Thr-841, Tyr-842 to Thr-851, Tyr-852 to Ala-861, and Tyr-862 to Gln-871. The segment at Tyr-124–Gln-871 is 69 X 10 AA tandem repeats of Y-[KRQ]-[PSTAHQR]-K-[AIPTSKGV]-[STR]-Y-[PTSVA]-[PSTQA]-[STYIPAQ]. Residues Tyr-184 to Pro-192 form a nonapeptide 1 region. Residues Tyr-213–Pro-221 are nonapeptide 2. Pro residues-rich tracts occupy residues Lys-273–Tyr-282 and Thr-291–Tyr-302. The interval Lys-273 to Ser-781 is disordered. Low complexity predominate over residues Thr-320–Pro-360. Pro residues predominate over residues Thr-361 to Tyr-372. Residues Thr-377 to Pro-390 show a composition bias toward low complexity. The segment covering Thr-391 to Tyr-402 has biased composition (pro residues). Residues Lys-403–Pro-450 are compositionally biased toward low complexity. Composition is skewed to pro residues over residues Thr-451–Tyr-462 and Thr-471–Tyr-482. Residues Pro-501–Pro-540 are compositionally biased toward low complexity. Residues Thr-541–Tyr-552 are compositionally biased toward pro residues. 2 stretches are compositionally biased toward low complexity: residues Tyr-568–Pro-590 and Thr-600–Pro-640. Positions Thr-641–Tyr-652 are enriched in pro residues. Low complexity-rich tracts occupy residues Ser-677–Pro-690 and Tyr-698–Pro-719. Residues Pro-754–Lys-763 are compositionally biased toward low complexity.

In terms of processing, hydroxylated on proline (mono- or dihydroxylation) and tyrosine residues (to L-DOPA = 3',4'-dihydroxyphenylalanine) of the tandem repeats. As to expression, produced by the byssal gland.

The protein resides in the secreted. In terms of biological role, provides adhesiveness to the mussel's foot. Mussels produce one of the strongest water insoluble glues. The mussel's adhesive is a bundle of threads, called a byssus, formed by a fibrous collagenous core coated with adhesive proteins. This is Adhesive plaque matrix protein (FP1) from Mytilus coruscus (Sea mussel).